The chain runs to 162 residues: Protein FAM162B (162 aa).

Positions 26-69 (EATRRPAPALPPRGLPCYSSGGAPSNSGPQGHGEIHRVPTQRRP) are disordered. Residues 107–127 (VKACYIMIGLTIIACFAVIVS) form a helical membrane-spanning segment.

Belongs to the UPF0389 family.

It localises to the membrane. The sequence is that of Protein FAM162B (FAM162B) from Homo sapiens (Human).